The primary structure comprises 480 residues: NADH-quinone oxidoreductase subunit N 1 (480 aa).

The next 14 helical transmembrane spans lie at 12–32 (LSMP…IGVF), 38–58 (TPTV…WLVL), 78–98 (FMKV…VGHA), 106–126 (FEFP…ISAN), 128–148 (LISL…VAAI), 163–183 (FVLG…VYGF), 203–223 (LGLV…ISAV), 241–261 (TAFF…RIVI), 271–291 (WQQI…FAAI), 303–323 (SSIG…MAGV), 326–346 (VILY…CILA), 372–392 (ATVL…AGFF), 396–416 (FVFV…GVLA), and 449–469 (LVFG…GPLG).

This sequence belongs to the complex I subunit 2 family. In terms of assembly, NDH-1 is composed of 14 different subunits. Subunits NuoA, H, J, K, L, M, N constitute the membrane sector of the complex.

Its subcellular location is the cell inner membrane. The enzyme catalyses a quinone + NADH + 5 H(+)(in) = a quinol + NAD(+) + 4 H(+)(out). NDH-1 shuttles electrons from NADH, via FMN and iron-sulfur (Fe-S) centers, to quinones in the respiratory chain. The immediate electron acceptor for the enzyme in this species is believed to be ubiquinone. Couples the redox reaction to proton translocation (for every two electrons transferred, four hydrogen ions are translocated across the cytoplasmic membrane), and thus conserves the redox energy in a proton gradient. The protein is NADH-quinone oxidoreductase subunit N 1 of Rhizobium meliloti (strain 1021) (Ensifer meliloti).